Consider the following 118-residue polypeptide: Myotrophin (118 aa).

ANK repeat units follow at residues 1–30 (MGDK…DVNR), 34–65 (GGRK…NAAD), and 67–98 (HGIT…TVKG).

Belongs to the myotrophin family.

The protein localises to the cytoplasm. Its subcellular location is the nucleus. The protein resides in the perinuclear region. Its function is as follows. Regulates NF-kappa-B transcription factor activity. Promotes growth of cardiomyocytes, but not cardiomyocyte proliferation. Promotes cardiac muscle hypertrophy. Plays a role in the regulation of the growth of actin filaments. Inhibits the activity of the F-actin-capping protein complex. The polypeptide is Myotrophin (mtpn) (Xenopus tropicalis (Western clawed frog)).